The following is a 270-amino-acid chain: DNA repair protein RecO (270 aa).

Residues 202 to 221 form a disordered region; sequence PELPPSTIDADTDNPSQPPS.

It belongs to the RecO family.

Functionally, involved in DNA repair and RecF pathway recombination. The sequence is that of DNA repair protein RecO from Rhodopirellula baltica (strain DSM 10527 / NCIMB 13988 / SH1).